A 134-amino-acid polypeptide reads, in one-letter code: Zinc finger protein 593 (134 aa).

A compositionally biased stretch (basic residues) spans methionine 1–arginine 25. 2 disordered regions span residues methionine 1–glycine 57 and serine 82–threonine 134. Over residues proline 26 to arginine 36 the composition is skewed to basic and acidic residues. The C2H2-type zinc-finger motif lies at histidine 61 to histidine 85.

The protein belongs to the ZNF593/BUD20 C2H2-type zinc-finger protein family. Associates with pre-60S ribosomal particles. Ubiquitous. Detected in spleen, prostate, testis, small intestine, colon and to a minor level in thymus and peripheral blood leukocytes.

It is found in the nucleus. The protein localises to the nucleolus. The protein resides in the cytoplasm. Involved in pre-60S ribosomal particles maturation by promoting the nuclear export of the 60S ribosome. Negatively modulates the DNA binding activity of Oct-2 and therefore its transcriptional regulatory activity. The chain is Zinc finger protein 593 (ZNF593) from Homo sapiens (Human).